The following is a 657-amino-acid chain: Probable intron-encoded endonuclease aI2 (657 aa).

Positions 1-245 (MKQMSYVTRW…TYEHLFWFFG (245 aa)) are COX1 exons 1 to 2 encoded. The next 6 membrane-spanning stretches (helical) occupy residues 19–39 (IGMT…GMSV), 69–89 (LLMM…NFFL), 103–123 (LNNI…CSVL), 152–172 (AMFA…NFMV), 188–208 (PLFA…LPVL), and 269–289 (MYFI…ANMV). The tract at residues 246-657 (QWWPTNYVNN…KFENKWNKKF (412 aa)) is COX1 intron 2 encoded.

This sequence in the C-terminal section; belongs to the LAGLIDADG endonuclease family. The protein in the N-terminal section; belongs to the heme-copper respiratory oxidase family. Post-translationally, the mature protein may arise from proteolytic cleavage of an in-frame translation of COX1 exons 1 and 2 plus intron 2, containing the aI2 open reading frame.

The protein localises to the mitochondrion. It is found in the membrane. Its function is as follows. Mitochondrial DNA endonuclease involved in intron homing. This Debaryomyces hansenii (strain ATCC 36239 / CBS 767 / BCRC 21394 / JCM 1990 / NBRC 0083 / IGC 2968) (Yeast) protein is Probable intron-encoded endonuclease aI2 (aI2).